A 430-amino-acid chain; its full sequence is Dihydroorotase (430 aa).

2 residues coordinate Zn(2+): His57 and His59. Substrate-binding positions include 59–61 (HLR) and Asn91. Asp151, His178, and His231 together coordinate Zn(2+). Asn277 is a binding site for substrate. Position 304 (Asp304) interacts with Zn(2+). Asp304 is a catalytic residue. Substrate-binding positions include His308 and 322–323 (PG).

The protein belongs to the metallo-dependent hydrolases superfamily. DHOase family. Class I DHOase subfamily. It depends on Zn(2+) as a cofactor.

It catalyses the reaction (S)-dihydroorotate + H2O = N-carbamoyl-L-aspartate + H(+). The protein operates within pyrimidine metabolism; UMP biosynthesis via de novo pathway; (S)-dihydroorotate from bicarbonate: step 3/3. Catalyzes the reversible cyclization of carbamoyl aspartate to dihydroorotate. The chain is Dihydroorotase from Mycobacterium tuberculosis (strain ATCC 25618 / H37Rv).